Here is a 355-residue protein sequence, read N- to C-terminus: DNA polymerase IV (355 aa).

Residues 4 to 185 (IIHVDMDCFY…LPLKKIPGVG (182 aa)) form the UmuC domain. Positions 8 and 103 each coordinate Mg(2+). The active site involves glutamate 104.

Belongs to the DNA polymerase type-Y family. As to quaternary structure, monomer. It depends on Mg(2+) as a cofactor.

It is found in the cytoplasm. The enzyme catalyses DNA(n) + a 2'-deoxyribonucleoside 5'-triphosphate = DNA(n+1) + diphosphate. In terms of biological role, poorly processive, error-prone DNA polymerase involved in untargeted mutagenesis. Copies undamaged DNA at stalled replication forks, which arise in vivo from mismatched or misaligned primer ends. These misaligned primers can be extended by PolIV. Exhibits no 3'-5' exonuclease (proofreading) activity. May be involved in translesional synthesis, in conjunction with the beta clamp from PolIII. The protein is DNA polymerase IV of Pasteurella multocida (strain Pm70).